Here is a 186-residue protein sequence, read N- to C-terminus: Ribosome-recycling factor (186 aa).

Belongs to the RRF family.

The protein resides in the cytoplasm. Its function is as follows. Responsible for the release of ribosomes from messenger RNA at the termination of protein biosynthesis. May increase the efficiency of translation by recycling ribosomes from one round of translation to another. This is Ribosome-recycling factor from Limosilactobacillus reuteri (Lactobacillus reuteri).